The chain runs to 718 residues: Ophiobolin F synthase oblA (718 aa).

A (7Z)-ophiobola-7,19-dien-3-ol synthase region spans residues 1–320 (MACKYSTLID…RYNGPTKFNE (320 aa)). The Mg(2+) site is built by Asp93 and Asp97. A substrate-binding site is contributed by Asp93. Residues 93 to 97 (DDVID) carry the DDXXD 1 motif. Residues 180–183 (RALD), Asn224, 228–232 (SFEKE), and 311–312 (RY) each bind substrate. The NSE/DTE signature appears at 224–232 (NDLFSFEKE). A geranylfarnesyl diphosphate synthase region spans residues 321–718 (LQLLRSEHGL…LRVMLELLKV (398 aa)). Residues 346 to 391 (LVEGDCHESKPNELKRKRNGVSVDDEMRTNGTNGAKKPAHVSQPST) form a disordered region. Positions 349-359 (GDCHESKPNEL) are enriched in basic and acidic residues. Isopentenyl diphosphate is bound by residues Lys429, Arg432, and His461. Mg(2+)-binding residues include Asp468 and Asp472. A DDXXD 2 motif is present at residues 468–472 (DDLED). A dimethylallyl diphosphate-binding site is contributed by Arg477. Arg478 is a binding site for isopentenyl diphosphate. Dimethylallyl diphosphate contacts are provided by Lys555, Thr556, Gln594, Asn601, Lys611, and Lys621.

It in the N-terminal section; belongs to the terpene synthase family. In the C-terminal section; belongs to the FPP/GGPP synthase family. It depends on Mg(2+) as a cofactor.

The catalysed reaction is isopentenyl diphosphate + (2E,6E)-farnesyl diphosphate = (2E,6E,10E)-geranylgeranyl diphosphate + diphosphate. It carries out the reaction isopentenyl diphosphate + (2E,6E,10E)-geranylgeranyl diphosphate = (2E,6E,10E,14E)-geranylfarnesyl diphosphate + diphosphate. It catalyses the reaction (2E,6E,10E,14E)-geranylfarnesyl diphosphate + H2O = ophiobolin F + diphosphate. Its pathway is secondary metabolite biosynthesis; terpenoid biosynthesis. Bifunctional sesterterpene synthase; part of the gene cluster that mediates the biosynthesis of the sesterterpenes ophiobolins, fungal phytotoxins with potential anti-cancer activities. The first step of the pathway is performed by the sesterterpene synthase oblA that possesses both prenyl transferase and terpene cyclase activity, converting isopentenyl diphosphate and dimethylallyl diphosphate into geranylfarnesyl diphosphate (GFPP) and further converting GFPP into ophiobolin F, respectively. Other sesterterpenoids (C(25) terpenoids) are found as minor products of oblA. It is expected that ophiobolin F is then oxidized to ophiobolin A via ophiobolin C and ophiobolin B intermediates by the combined action of the cytochrome P450 monooxygenase oblB and the FAD-dependent oxidoreductase oblC. Although oblB catalyzes multistep oxygenations at C5 and C21/C7 in a relatively efficient manner, it is unable to convert ophiobolin F to ophiobolin C and produces instead several unexpected derivatives. The polypeptide is Ophiobolin F synthase oblA (Aspergillus clavatus (strain ATCC 1007 / CBS 513.65 / DSM 816 / NCTC 3887 / NRRL 1 / QM 1276 / 107)).